The following is a 213-amino-acid chain: Histone H1.2 (213 aa).

Positions 1–17 (MSETAPAAPAAAPPAEK) are enriched in low complexity. The interval 1-41 (MSETAPAAPAAAPPAEKTPVKKKAAKKPAGARRKASGPPVS) is disordered. S2 carries the post-translational modification N-acetylserine; partial. The residue at position 2 (S2) is a Phosphoserine. An N6-acetyllysine modification is found at K17. Residues 20–35 (VKKKAAKKPAGARRKA) show a composition bias toward basic residues. K23, K26, and K27 each carry N6-(2-hydroxyisobutyryl)lysine. K34 carries the post-translational modification N6-(beta-hydroxybutyryl)lysine; alternate. K34 bears the N6-crotonyllysine; alternate mark. K34 is modified (N6-methyllysine; alternate). The region spanning 36 to 109 (SGPPVSELIT…GASGSFKLNK (74 aa)) is the H15 domain. K46 bears the N6-(2-hydroxyisobutyryl)lysine mark. At K52 the chain carries N6-(beta-hydroxybutyryl)lysine; alternate. K52 carries the post-translational modification N6-(2-hydroxyisobutyryl)lysine; alternate. At R54 the chain carries Citrulline. At K63 the chain carries N6-(2-hydroxyisobutyryl)lysine. K64 carries the post-translational modification N6-(beta-hydroxybutyryl)lysine; alternate. An N6-crotonyllysine; alternate modification is found at K64. K64 is modified (N6-(2-hydroxyisobutyryl)lysine; alternate). Residues K75 and K81 each carry the N6-(2-hydroxyisobutyryl)lysine modification. An N6-(beta-hydroxybutyryl)lysine; alternate mark is found at K85 and K90. N6-crotonyllysine; alternate is present on residues K85, K90, and K97. N6-(2-hydroxyisobutyryl)lysine; alternate is present on residues K85, K90, and K97. Positions 95-213 (QTKGTGASGS…KPKKAAPKKK (119 aa)) are disordered. K97 is subject to N6-succinyllysine; alternate. S104 bears the Phosphoserine; by PKC mark. K106 bears the N6-(beta-hydroxybutyryl)lysine mark. K110, K117, K121, K129, and K136 each carry N6-(2-hydroxyisobutyryl)lysine. Over residues 119-140 (KAKKAGAAKPKKAAGAAKKTKK) the composition is skewed to basic residues. Phosphothreonine is present on T146. An N6-(2-hydroxyisobutyryl)lysine modification is found at K148. Positions 149–160 (KTAKKTPKKAKK) are enriched in basic residues. K159 and K168 each carry N6-crotonyllysine; alternate. K159 and K168 each carry N6-(2-hydroxyisobutyryl)lysine; alternate. Basic residues predominate over residues 169–186 (KVAKSPKKAKAAKPKKAA). K187 is modified (N6-methyllysine; by EHMT1 and EHMT2). S188 carries the post-translational modification ADP-ribosylserine. Residues 193 to 213 (VKPKAAKPKVAKPKKAAPKKK) show a composition bias toward basic residues.

This sequence belongs to the histone H1/H5 family. Post-translationally, H1 histones are progressively phosphorylated during the cell cycle, becoming maximally phosphorylated during late G2 phase and M phase, and being dephosphorylated sharply thereafter. Crotonylation (Kcr) is specifically present in male germ cells and marks testis-specific genes in post-meiotic cells, including X-linked genes that escape sex chromosome inactivation in haploid cells. Crotonylation marks active promoters and enhancers and confers resistance to transcriptional repressors. It is also associated with post-meiotically activated genes on autosomes. In terms of processing, ADP-ribosylated on Ser-188 in response to DNA damage. Post-translationally, citrullination at Arg-54 (H1R54ci) by PADI4 takes place within the DNA-binding site of H1 and results in its displacement from chromatin and global chromatin decondensation, thereby promoting pluripotency and stem cell maintenance.

It localises to the nucleus. Its subcellular location is the chromosome. Its function is as follows. Histone H1 protein binds to linker DNA between nucleosomes forming the macromolecular structure known as the chromatin fiber. Histones H1 are necessary for the condensation of nucleosome chains into higher-order structured fibers. Also acts as a regulator of individual gene transcription through chromatin remodeling, nucleosome spacing and DNA methylation. This chain is Histone H1.2, found in Bos taurus (Bovine).